Reading from the N-terminus, the 170-residue chain is Ergosterol biosynthetic protein 28 (170 aa).

3 helical membrane passes run 7 to 27 (FLPEAKGVLPYYMIILSIISI), 116 to 136 (TLAYWTYIVAFSHFASELFVF), and 141 to 161 (FGLPQYFPFALASTSLIWMPL).

The protein belongs to the ERG28 family. In terms of assembly, heterotetramer of ERG25, ERG26, ERG27 and ERG28. ERG28 acts as a scaffold to tether ERG27 and other 4,4-demethylation-related enzymes, forming a demethylation enzyme complex, in the endoplasmic reticulum.

Its subcellular location is the endoplasmic reticulum membrane. It functions in the pathway steroid metabolism; ergosterol biosynthesis. In terms of biological role, sterol 24-C-methyltransferase; part of the third module of ergosterol biosynthesis pathway that includes the late steps of the pathway. ERG28 has a role as a scaffold to help anchor the catalytic components of the C-4 demethylation complex ERG25, ERG26 and ERG27 to the endoplasmic reticulum. The third module or late pathway involves the ergosterol synthesis itself through consecutive reactions that mainly occur in the endoplasmic reticulum (ER) membrane. Firstly, the squalene synthase ERG9 catalyzes the condensation of 2 farnesyl pyrophosphate moieties to form squalene, which is the precursor of all steroids. Squalene synthase is crucial for balancing the incorporation of farnesyl diphosphate (FPP) into sterol and nonsterol isoprene synthesis. Secondly, squalene is converted into lanosterol by the consecutive action of the squalene epoxidase ERG1 and the lanosterol synthase ERG7. Then, the delta(24)-sterol C-methyltransferase ERG6 methylates lanosterol at C-24 to produce eburicol. Eburicol is the substrate of the sterol 14-alpha demethylase encoded by CYP51A, CYP51B and CYP51C, to yield 4,4,24-trimethyl ergosta-8,14,24(28)-trienol. CYP51B encodes the enzyme primarily responsible for sterol 14-alpha-demethylation, and plays an essential role in ascospore formation. CYP51A encodes an additional sterol 14-alpha-demethylase, induced on ergosterol depletion and responsible for the intrinsic variation in azole sensitivity. The third CYP51 isoform, CYP51C, does not encode a sterol 14-alpha-demethylase, but is required for full virulence on host wheat ears. The C-14 reductase ERG24 then reduces the C14=C15 double bond which leads to 4,4-dimethylfecosterol. A sequence of further demethylations at C-4, involving the C-4 demethylation complex containing the C-4 methylsterol oxidases ERG25, the sterol-4-alpha-carboxylate 3-dehydrogenase ERG26 and the 3-keto-steroid reductase ERG27, leads to the production of fecosterol via 4-methylfecosterol. ERG28 has a role as a scaffold to help anchor ERG25, ERG26 and ERG27 to the endoplasmic reticulum. The C-8 sterol isomerase ERG2 then catalyzes the reaction which results in unsaturation at C-7 in the B ring of sterols and thus converts fecosterol to episterol. The sterol-C5-desaturases ERG3A and ERG3BB then catalyze the introduction of a C-5 double bond in the B ring to produce 5-dehydroepisterol. The C-22 sterol desaturases ERG5A and ERG5B further convert 5-dehydroepisterol into ergosta-5,7,22,24(28)-tetraen-3beta-ol by forming the C-22(23) double bond in the sterol side chain. Finally, ergosta-5,7,22,24(28)-tetraen-3beta-ol is substrate of the C-24(28) sterol reductase ERG4 to produce ergosterol. This Gibberella zeae (strain ATCC MYA-4620 / CBS 123657 / FGSC 9075 / NRRL 31084 / PH-1) (Wheat head blight fungus) protein is Ergosterol biosynthetic protein 28.